We begin with the raw amino-acid sequence, 792 residues long: MLPAGEIGASPAAPCCSESGDERKNLEEKSDINVTVLIGSKQVSEGTDNGDLPSYVSAFIEKEVGNDLKSLKKLDKLIEQRTVSKMQLEEQVLTISSEIPKRIRSALKNAEESKQFLNQFLEQETHLFSAINSHLLTAQPWMDDLGTMISQIEEIERHLAYLKWISQIEELSDNIQQYLMTNNVPEAASTLVSMAELDIKLQESSCTHLLGFMRATVKFWHKILKDKLTSDFEEILAQLHWPFIAPPQSQTVGLSRPASAPEIYSYLETLFCQLLKLQTSDELLTEPKQLPEKYSLPASPSVILPIQVMLTPLQKRFRYHFRGNRQTNVLSKPEWYLAQVLMWIGNHTEFLDEKIQPILDKVGSLVNARLEFSRGLMMLVLEKLATDIPCLLYDDNLFCHLVDEVLLFERELHSVHGYPGTFASCMHILSEETCFQRWLTVERKFALQKMDSMLSSEAAWVSQYKDITDVDEMKVPDCAETFMTLLLVITDRYKNLPTASRKLQFLELQKDLVDDFRIRLTQVMKEETRASLGFRYCAILNAVNYISTVLADWADNVFFLQLQQAALEVFAENNTLSKLQLGQLASMESSVFDDMINLLERLKHDMLTRQVDHVFREVKDAAKLYKKERWLSLPSQSEQAVMSLSSSACPLLLTLRDHLLQLEQQLCFSLFKIFWQMLVEKLDVYIYQEIILANHFNEGGAAQLQFDMTRNLFPLFSHYCKRPENYFKHIKEACIVLNLNVGSALLLKDVLQSASGQLPATAALNEVGIYKLAQQDVEILLNLRTNWPNTGK.

Positions 1-22 (MLPAGEIGASPAAPCCSESGDE) are disordered. The stretch at 103–124 (IRSALKNAEESKQFLNQFLEQE) forms a coiled coil. The 573-residue stretch at 220–792 (WHKILKDKLT…LRTNWPNTGK (573 aa)) folds into the RINT1/TIP20 domain.

It belongs to the RINT1 family. In terms of assembly, component of the NRZ complex composed of NBAS, ZW10 and RINT1/TIP20L; NRZ associates with SNAREs STX18, USE1L, BNIP1/SEC20L and SEC22B (the assembly has been described as syntaxin 18 complex). Interacts directly with BNIP1/SEC20L and ZW10. Interacts with UVRAG. Interacts with RAD50 during late S and G2/M phases. Interacts with RBL2, preferentially with the active, hypophosphorylated form.

It localises to the cytoplasm. The protein resides in the endoplasmic reticulum membrane. Functionally, involved in regulation of membrane traffic between the Golgi and the endoplasmic reticulum (ER); the function is proposed to depend on its association in the NRZ complex which is believed to play a role in SNARE assembly at the ER. May play a role in cell cycle checkpoint control. Essential for telomere length control. This chain is RAD50-interacting protein 1 (RINT1), found in Homo sapiens (Human).